The primary structure comprises 601 residues: Arginine--tRNA ligase (601 aa).

The 'HIGH' region signature appears at 133–143; it reads PNTNKPLHLGH.

This sequence belongs to the class-I aminoacyl-tRNA synthetase family. Monomer.

The protein resides in the cytoplasm. The enzyme catalyses tRNA(Arg) + L-arginine + ATP = L-arginyl-tRNA(Arg) + AMP + diphosphate. In Flavobacterium psychrophilum (strain ATCC 49511 / DSM 21280 / CIP 103535 / JIP02/86), this protein is Arginine--tRNA ligase.